Reading from the N-terminus, the 364-residue chain is MEPLLSFKGVTKGFDDVTILNKMDLEIESGHFYTLLGPSGCGKTTILKLIAGFEQPDDGDIIYLNKSIGELPANKRKVNTVFQDYALFPHLNVYDNIAFGLKLKKHSKKDIDKKVIDALKLVKLSGYEQRNINEMSGGQKQRVAIARAIVNEPEILLLDESLSALDLKLRTEMQYELRELQKRLGITFIFVTHDQEEALALSDYIFVMKDGKIQQFGTPTDIYDEPVNRFVADFIGESNIVEGKMVEDFVVNIYGQDFECVDAGIPSGKNVEVVIRPEDISLIEADKGLFKATVDSMLFRGVHYEICCIDRKGYEWVIQTTKKAEVGSEVGLYFDPEAIHIMVPGETEEEFDKRIESYEEFDNA.

The 231-residue stretch at 5 to 235 folds into the ABC transporter domain; the sequence is LSFKGVTKGF…PVNRFVADFI (231 aa). 37–44 serves as a coordination point for ATP; that stretch reads GPSGCGKT.

Belongs to the ABC transporter superfamily. Spermidine/putrescine importer (TC 3.A.1.11.1) family. As to quaternary structure, the complex is composed of two ATP-binding proteins (PotA), two transmembrane proteins (PotB and PotC) and a solute-binding protein (PotD).

It localises to the cell membrane. The enzyme catalyses ATP + H2O + polyamine-[polyamine-binding protein]Side 1 = ADP + phosphate + polyamineSide 2 + [polyamine-binding protein]Side 1.. Its function is as follows. Part of the ABC transporter complex PotABCD involved in spermidine/putrescine import. Responsible for energy coupling to the transport system. The polypeptide is Spermidine/putrescine import ATP-binding protein PotA (Staphylococcus haemolyticus (strain JCSC1435)).